Consider the following 38-residue polypeptide: Photosystem I reaction center subunit IX (38 aa).

Residues 4 to 24 form a helical membrane-spanning segment; it reads FLTTAPVVAAIWFTLTAGILI.

It belongs to the PsaJ family.

The protein resides in the cellular thylakoid membrane. Its function is as follows. May help in the organization of the PsaE and PsaF subunits. The chain is Photosystem I reaction center subunit IX from Parasynechococcus marenigrum (strain WH8102).